A 497-amino-acid chain; its full sequence is Aspartyl/glutamyl-tRNA(Asn/Gln) amidotransferase subunit B (497 aa).

It belongs to the GatB/GatE family. GatB subfamily. Heterotrimer of A, B and C subunits.

It catalyses the reaction L-glutamyl-tRNA(Gln) + L-glutamine + ATP + H2O = L-glutaminyl-tRNA(Gln) + L-glutamate + ADP + phosphate + H(+). The catalysed reaction is L-aspartyl-tRNA(Asn) + L-glutamine + ATP + H2O = L-asparaginyl-tRNA(Asn) + L-glutamate + ADP + phosphate + 2 H(+). Its function is as follows. Allows the formation of correctly charged Asn-tRNA(Asn) or Gln-tRNA(Gln) through the transamidation of misacylated Asp-tRNA(Asn) or Glu-tRNA(Gln) in organisms which lack either or both of asparaginyl-tRNA or glutaminyl-tRNA synthetases. The reaction takes place in the presence of glutamine and ATP through an activated phospho-Asp-tRNA(Asn) or phospho-Glu-tRNA(Gln). The sequence is that of Aspartyl/glutamyl-tRNA(Asn/Gln) amidotransferase subunit B from Nocardioides sp. (strain ATCC BAA-499 / JS614).